Consider the following 425-residue polypeptide: UPF0597 protein KPN78578_43500 (425 aa).

It belongs to the UPF0597 family.

The chain is UPF0597 protein KPN78578_43500 from Klebsiella pneumoniae subsp. pneumoniae (strain ATCC 700721 / MGH 78578).